The following is a 490-amino-acid chain: Adenylyltransferase and sulfurtransferase uba4 (490 aa).

A disordered region spans residues 33-54 (EAAKTPPYSDSTETDRGSSSST). ATP contacts are provided by residues G96, D117, 124-128 (SNLHR), K141, and 185-186 (DH). C234 and C237 together coordinate Zn(2+). C251 (glycyl thioester intermediate; for adenylyltransferase activity) is an active-site residue. Residues C323 and C326 each coordinate Zn(2+). Residues 379–488 (EHGKPVLLDV…WKREVDSTLP (110 aa)) form the Rhodanese domain. C443 acts as the Cysteine persulfide intermediate; for sulfurtransferase activity in catalysis.

The protein in the N-terminal section; belongs to the HesA/MoeB/ThiF family. UBA4 subfamily. Zn(2+) serves as cofactor.

The protein localises to the cytoplasm. It is found in the cytosol. It catalyses the reaction [molybdopterin-synthase sulfur-carrier protein]-C-terminal Gly-Gly + ATP + H(+) = [molybdopterin-synthase sulfur-carrier protein]-C-terminal Gly-Gly-AMP + diphosphate. The enzyme catalyses [molybdopterin-synthase sulfur-carrier protein]-C-terminal Gly-Gly-AMP + S-sulfanyl-L-cysteinyl-[cysteine desulfurase] + AH2 = [molybdopterin-synthase sulfur-carrier protein]-C-terminal-Gly-aminoethanethioate + L-cysteinyl-[cysteine desulfurase] + A + AMP + 2 H(+). It functions in the pathway tRNA modification; 5-methoxycarbonylmethyl-2-thiouridine-tRNA biosynthesis. Functionally, plays a central role in 2-thiolation of mcm(5)S(2)U at tRNA wobble positions of cytosolic tRNA(Lys), tRNA(Glu) and tRNA(Gln). Also essential during biosynthesis of the molybdenum cofactor. Acts by mediating the C-terminal thiocarboxylation of sulfur carriers URM1 and MOCS2A. Its N-terminus first activates urm1 and MOCS2A as acyl-adenylates (-COAMP), then the persulfide sulfur on the catalytic cysteine is transferred to URM1 and MOCS2A to form thiocarboxylation (-COSH) of their C-terminus. The reaction probably involves hydrogen sulfide that is generated from the persulfide intermediate and that acts as a nucleophile towards URM1 and MOCS2A. Subsequently, a transient disulfide bond is formed. Does not use thiosulfate as sulfur donor; NFS1 probably acting as a sulfur donor for thiocarboxylation reactions. This Pyricularia oryzae (strain 70-15 / ATCC MYA-4617 / FGSC 8958) (Rice blast fungus) protein is Adenylyltransferase and sulfurtransferase uba4.